The chain runs to 293 residues: Glycine--tRNA ligase alpha subunit (293 aa).

Belongs to the class-II aminoacyl-tRNA synthetase family. Tetramer of two alpha and two beta subunits.

Its subcellular location is the cytoplasm. It carries out the reaction tRNA(Gly) + glycine + ATP = glycyl-tRNA(Gly) + AMP + diphosphate. This Sulfurimonas denitrificans (strain ATCC 33889 / DSM 1251) (Thiomicrospira denitrificans (strain ATCC 33889 / DSM 1251)) protein is Glycine--tRNA ligase alpha subunit.